Here is a 65-residue protein sequence, read N- to C-terminus: Large ribosomal subunit protein bL33c (65 aa).

It belongs to the bacterial ribosomal protein bL33 family.

The protein localises to the plastid. The protein is Large ribosomal subunit protein bL33c of Aneura mirabilis (Parasitic liverwort).